The sequence spans 446 residues: MRECLSIHIGQAGIQIGDACWELYCLEHGIQPNGVVLDTQQDQLENAKMEHTNASFDTFFCETRAGKHVPRALFVDLEPTVIDGIRTGQHRSLFHPEQLLSGKEDAANNYARGRYSVGSEVIDLVLERTRKLAEQCGGLQGFLIFRSFGGGTGSGFTSLLMERLTGEYSRKTKLEFSVYPAPRISTAVVEPYNSVLTTHSTTEHTDCTFMVDNEAVYDICHRKLGVECPSHASINRLVVQVVSSITASLRFEGPLNVDLIEFQTNLVPYPRIHFPMTAFAPIVSADKAYHEQFSVSDITTACFESSNQLVKCDPRLGKYMACCLLYRGDVVPKEVNAAIAATKSRHSVQFVDWCPTGFKVGINNRPPTVMPGGDLAKVHRSICMLSNTTAIVEAWARLDHKFDLMYAKRAFLHWYLREGMEEAEFLEAREDLAALERDYEEVAQSF.

The MREC motif signature appears at M1–C4. Residues Q11, E78, S147, G151, T152, T186, N213, and N235 each contribute to the GTP site. Residue E78 participates in Mg(2+) binding. Residue E261 is part of the active site.

The protein belongs to the tubulin family. As to quaternary structure, dimer of alpha and beta chains. A typical microtubule is a hollow water-filled tube with an outer diameter of 25 nm and an inner diameter of 15 nM. Alpha-beta heterodimers associate head-to-tail to form protofilaments running lengthwise along the microtubule wall with the beta-tubulin subunit facing the microtubule plus end conferring a structural polarity. Microtubules usually have 13 protofilaments but different protofilament numbers can be found in some organisms and specialized cells. The cofactor is Mg(2+). Post-translationally, some glutamate residues at the C-terminus are polyglutamylated, resulting in polyglutamate chains on the gamma-carboxyl group. Polyglutamylation plays a key role in microtubule severing by spastin (SPAST). SPAST preferentially recognizes and acts on microtubules decorated with short polyglutamate tails: severing activity by SPAST increases as the number of glutamates per tubulin rises from one to eight, but decreases beyond this glutamylation threshold. Glutamylation is also involved in cilia motility. In terms of processing, some glutamate residues at the C-terminus are monoglycylated but not polyglycylated due to the absence of functional TTLL10 in human. Monoglycylation is mainly limited to tubulin incorporated into cilia and flagella axonemes, which is required for their stability and maintenance. Flagella glycylation controls sperm motility. Both polyglutamylation and monoglycylation can coexist on the same protein on adjacent residues, and lowering glycylation levels increases polyglutamylation, and reciprocally.

Its subcellular location is the cytoplasm. The protein resides in the cytoskeleton. It catalyses the reaction GTP + H2O = GDP + phosphate + H(+). In terms of biological role, tubulin is the major constituent of microtubules, a cylinder consisting of laterally associated linear protofilaments composed of alpha- and beta-tubulin heterodimers. Microtubules grow by the addition of GTP-tubulin dimers to the microtubule end, where a stabilizing cap forms. Below the cap, tubulin dimers are in GDP-bound state, owing to GTPase activity of alpha-tubulin. This is Tubulin alpha chain-like 3 (TUBAL3) from Homo sapiens (Human).